The chain runs to 236 residues: uncharacterized protein (236 aa).

The chain crosses the membrane as a helical span at residues 52 to 72 (FFPYIALFQIIMLIILLILYF). The segment at 183–236 (SDKREHDDEELSFTTEMETITTETETSSTIPHLRSLPIKSESSMETTSEETDEE) is disordered. The span at 196-212 (TTEMETITTETETSSTI) shows a compositional bias: low complexity.

The protein localises to the membrane. This is an uncharacterized protein from Acheta domesticus (House cricket).